A 325-amino-acid chain; its full sequence is 4-hydroxy-3-methylbut-2-enyl diphosphate reductase (325 aa).

C13 contacts [4Fe-4S] cluster. (2E)-4-hydroxy-3-methylbut-2-enyl diphosphate is bound by residues H42 and H76. Residues H42 and H76 each coordinate dimethylallyl diphosphate. Residues H42 and H76 each coordinate isopentenyl diphosphate. C98 serves as a coordination point for [4Fe-4S] cluster. H126 is a (2E)-4-hydroxy-3-methylbut-2-enyl diphosphate binding site. Residue H126 coordinates dimethylallyl diphosphate. H126 contacts isopentenyl diphosphate. The Proton donor role is filled by E128. T169 is a (2E)-4-hydroxy-3-methylbut-2-enyl diphosphate binding site. C230 provides a ligand contact to [4Fe-4S] cluster. Residues S258, S259, N260, and S306 each contribute to the (2E)-4-hydroxy-3-methylbut-2-enyl diphosphate site. 4 residues coordinate dimethylallyl diphosphate: S258, S259, N260, and S306. 4 residues coordinate isopentenyl diphosphate: S258, S259, N260, and S306.

It belongs to the IspH family. The cofactor is [4Fe-4S] cluster.

It catalyses the reaction isopentenyl diphosphate + 2 oxidized [2Fe-2S]-[ferredoxin] + H2O = (2E)-4-hydroxy-3-methylbut-2-enyl diphosphate + 2 reduced [2Fe-2S]-[ferredoxin] + 2 H(+). It carries out the reaction dimethylallyl diphosphate + 2 oxidized [2Fe-2S]-[ferredoxin] + H2O = (2E)-4-hydroxy-3-methylbut-2-enyl diphosphate + 2 reduced [2Fe-2S]-[ferredoxin] + 2 H(+). The protein operates within isoprenoid biosynthesis; dimethylallyl diphosphate biosynthesis; dimethylallyl diphosphate from (2E)-4-hydroxy-3-methylbutenyl diphosphate: step 1/1. Its pathway is isoprenoid biosynthesis; isopentenyl diphosphate biosynthesis via DXP pathway; isopentenyl diphosphate from 1-deoxy-D-xylulose 5-phosphate: step 6/6. Its function is as follows. Catalyzes the conversion of 1-hydroxy-2-methyl-2-(E)-butenyl 4-diphosphate (HMBPP) into a mixture of isopentenyl diphosphate (IPP) and dimethylallyl diphosphate (DMAPP). Acts in the terminal step of the DOXP/MEP pathway for isoprenoid precursor biosynthesis. The protein is 4-hydroxy-3-methylbut-2-enyl diphosphate reductase of Prosthecochloris aestuarii (strain DSM 271 / SK 413).